A 336-amino-acid polypeptide reads, in one-letter code: Ferredoxin--NADP reductase 1 (336 aa).

Glu-37, Lys-45, Phe-50, Val-90, Leu-125, Asp-287, and Thr-328 together coordinate FAD.

Belongs to the ferredoxin--NADP reductase type 2 family. In terms of assembly, homodimer. It depends on FAD as a cofactor.

It carries out the reaction 2 reduced [2Fe-2S]-[ferredoxin] + NADP(+) + H(+) = 2 oxidized [2Fe-2S]-[ferredoxin] + NADPH. In Bacillus velezensis (strain DSM 23117 / BGSC 10A6 / LMG 26770 / FZB42) (Bacillus amyloliquefaciens subsp. plantarum), this protein is Ferredoxin--NADP reductase 1.